Consider the following 332-residue polypeptide: 2-hydroxyacid dehydrogenase homolog 2 (332 aa).

NAD(+) is bound by residues 154 to 155 (KI), 233 to 235 (TSR), and Asp-259. Arg-235 is an active-site residue. Residue Glu-264 is part of the active site. Catalysis depends on His-296, which acts as the Proton donor. Residue 296-299 (HQAF) participates in NAD(+) binding.

Belongs to the D-isomer specific 2-hydroxyacid dehydrogenase family.

It localises to the cytoplasm. Its subcellular location is the nucleus. The sequence is that of 2-hydroxyacid dehydrogenase homolog 2 from Schizosaccharomyces pombe (strain 972 / ATCC 24843) (Fission yeast).